A 596-amino-acid chain; its full sequence is Putative ankyrin repeat protein FPV024 (596 aa).

ANK repeat units follow at residues 5 to 34 (KLRK…TFSN), 37 to 66 (ALST…DINK), 68 to 96 (KSPP…DIEK), 99 to 128 (LGNS…DPNT), 130 to 158 (FINY…SLNI), 162 to 191 (HFKT…SLTI), 195 to 225 (YNNH…PVNE), 229 to 258 (LERT…DPNI), 262 to 291 (CLGT…NVNI), 295 to 324 (TIDT…NTRL), 326 to 355 (SRNP…EVNI), 359 to 389 (EGYT…NPNM), and 394 to 423 (NENT…DVHS).

The polypeptide is Putative ankyrin repeat protein FPV024 (Fowlpox virus (strain NVSL) (FPV)).